Reading from the N-terminus, the 312-residue chain is DNA-directed RNA polymerase subunit alpha (312 aa).

Positions 1–226 are alpha N-terminal domain (alpha-NTD); the sequence is MIEFEKPIIT…EHLNLFTDLT (226 aa). The segment at 243-312 is alpha C-terminal domain (alpha-CTD); that stretch reads DEKVLDRTIE…DLGLGLKNDK (70 aa).

This sequence belongs to the RNA polymerase alpha chain family. As to quaternary structure, homodimer. The RNAP catalytic core consists of 2 alpha, 1 beta, 1 beta' and 1 omega subunit. When a sigma factor is associated with the core the holoenzyme is formed, which can initiate transcription.

It carries out the reaction RNA(n) + a ribonucleoside 5'-triphosphate = RNA(n+1) + diphosphate. In terms of biological role, DNA-dependent RNA polymerase catalyzes the transcription of DNA into RNA using the four ribonucleoside triphosphates as substrates. This chain is DNA-directed RNA polymerase subunit alpha, found in Streptococcus mutans serotype c (strain ATCC 700610 / UA159).